Consider the following 430-residue polypeptide: Transcobalamin-2 (430 aa).

Positions 1 to 18 (MELLKALLLLSGVFGALA) are cleaved as a signal peptide. 3 disulfides stabilise this stretch: Cys-21–Cys-270, Cys-116–Cys-312, and Cys-165–Cys-208. Residues 152–156 (TNYYQ), His-193, 193–197 (HVSVD), Asn-245, Ser-248, Gln-294, and 398–400 (WQL) each bind cob(II)alamin.

The protein belongs to the eukaryotic cobalamin transport proteins family. Interacts with CD320 (via LDL-receptor class A domains).

The protein localises to the secreted. Functionally, primary vitamin B12-binding and transport protein. Delivers cobalamin to cells. In Mus musculus (Mouse), this protein is Transcobalamin-2 (Tcn2).